Consider the following 130-residue polypeptide: Phosphomevalonate dehydratase small subunit (130 aa).

Ser-62 (proton acceptor) is an active-site residue.

It belongs to the AcnX type II small subunit family. In terms of assembly, heterodimer composed of a large subunit (PMDh-L) and a small subunit (PMDh-S).

It carries out the reaction (R)-5-phosphomevalonate = (2E)-3-methyl-5-phosphooxypent-2-enoate + H2O. Its pathway is isoprenoid biosynthesis; isopentenyl diphosphate biosynthesis via mevalonate pathway. In terms of biological role, component of a hydro-lyase that catalyzes the dehydration of mevalonate 5-phosphate (MVA5P) to form trans-anhydromevalonate 5-phosphate (tAHMP). Involved in the archaeal mevalonate (MVA) pathway, which provides fundamental precursors for isoprenoid biosynthesis, such as isopentenyl diphosphate (IPP) and dimethylallyl diphosphate (DMAPP). In Thermococcus onnurineus (strain NA1), this protein is Phosphomevalonate dehydratase small subunit.